The sequence spans 124 residues: Late histone H2A.2.1 (124 aa).

Residues 1-18 (MSGRGKGAKAKSKAKSRS) show a composition bias toward basic residues. Residues 1–21 (MSGRGKGAKAKSKAKSRSSRA) form a disordered region. N-acetylserine is present on Ser2. Phosphoserine is present on Ser2. Residue Gln104 is modified to N5-methylglutamine. A Glycyl lysine isopeptide (Lys-Gly) (interchain with G-Cter in ubiquitin) cross-link involves residue Lys119.

Belongs to the histone H2A family. The nucleosome is a histone octamer containing two molecules each of H2A, H2B, H3 and H4 assembled in one H3-H4 heterotetramer and two H2A-H2B heterodimers. The octamer wraps approximately 147 bp of DNA. In terms of processing, monoubiquitination of Lys-119 gives a specific tag for epigenetic transcriptional repression. Post-translationally, phosphorylation of Ser-2 directly represses transcription.

The protein localises to the nucleus. It localises to the chromosome. Functionally, core component of nucleosome. Nucleosomes wrap and compact DNA into chromatin, limiting DNA accessibility to the cellular machineries which require DNA as a template. Histones thereby play a central role in transcription regulation, DNA repair, DNA replication and chromosomal stability. DNA accessibility is regulated via a complex set of post-translational modifications of histones, also called histone code, and nucleosome remodeling. The sequence is that of Late histone H2A.2.1 from Psammechinus miliaris (Green sea urchin).